Here is a 442-residue protein sequence, read N- to C-terminus: Phosphoglucosamine mutase (442 aa).

Ser103 serves as the catalytic Phosphoserine intermediate. Ser103, Asp241, Asp243, and Asp245 together coordinate Mg(2+). Ser103 carries the post-translational modification Phosphoserine.

This sequence belongs to the phosphohexose mutase family. It depends on Mg(2+) as a cofactor. In terms of processing, activated by phosphorylation.

It catalyses the reaction alpha-D-glucosamine 1-phosphate = D-glucosamine 6-phosphate. In terms of biological role, catalyzes the conversion of glucosamine-6-phosphate to glucosamine-1-phosphate. The polypeptide is Phosphoglucosamine mutase (Deinococcus deserti (strain DSM 17065 / CIP 109153 / LMG 22923 / VCD115)).